Consider the following 52-residue polypeptide: Lantibiotic gallidermin (52 aa).

Positions 1-30 are excised as a propeptide; sequence MEAVKEKNELFDLDVKVNAKESNDSGAEPR. The segment at residues 33–37 is a cross-link (lanthionine (Ser-Cys)); sequence SKFLC. The beta-methyllanthionine (Thr-Cys) cross-link spans 38–41; the sequence is TPGC. Thr-44 is modified ((Z)-2,3-didehydrobutyrine). Residues 46–51 constitute a cross-link (lanthionine (Ser-Cys)); sequence SFNSYC. Residues 49-52 constitute a cross-link (S-(2-aminovinyl)-D-cysteine (Ser-Cys)); the sequence is SYCC.

It belongs to the type A lantibiotic family. In terms of processing, maturation of lantibiotics involves the enzymatic conversion of Thr, and Ser into dehydrated AA and the formation of thioether bonds with cysteine. The C-terminal lanthionine undergoes decarboxylation. This is followed by membrane translocation and cleavage of the modified precursor. Post-translationally, the structure of the 2,3-didehydrobutyrine is not discussed in PubMed:1932575. However, in Fig. 5 the NMR model appears to have the Z-isomer.

Functionally, lanthionine-containing peptide antibiotic (lantibiotic) active on Gram-positive bacteria. The bactericidal activity of lantibiotics is based on depolarization of energized bacterial cytoplasmic membranes, initiated by the formation of aqueous transmembrane pores. The chain is Lantibiotic gallidermin (gdmA) from Staphylococcus gallinarum.